The sequence spans 374 residues: DNA replication and repair protein RecF (374 aa).

Position 34 to 41 (34 to 41 (GNNGSGKT)) interacts with ATP.

It belongs to the RecF family.

Its subcellular location is the cytoplasm. Functionally, the RecF protein is involved in DNA metabolism; it is required for DNA replication and normal SOS inducibility. RecF binds preferentially to single-stranded, linear DNA. It also seems to bind ATP. This is DNA replication and repair protein RecF from Allorhizobium ampelinum (strain ATCC BAA-846 / DSM 112012 / S4) (Agrobacterium vitis (strain S4)).